The primary structure comprises 405 residues: Palmitoyltransferase PFA3 (405 aa).

The Cytoplasmic segment spans residues 1-27; that stretch reads MLISHPRIMIRHAPWVTSIETFCCSLA. A helical membrane pass occupies residues 28–48; the sequence is TLFPKVFYTSVLTWSVYALIV. At 49–62 the chain is on the lumenal side; it reads HGCYDTLMTTQETS. The helical transmembrane segment at 63-83 threads the bilayer; the sequence is IFAIAIGLIGLTLYILCLYTY. Residues 84–214 lie on the Cytoplasmic side of the membrane; sequence FKVLRAGPGS…GFYNHKFFAQ (131 aa). The region spanning 167–217 is the DHHC domain; sequence RYCTKCSVWKPDRCHHCSTCNRCVLRMDHHCPWFAMCVGFYNHKFFAQFLM. The helical transmembrane segment at 215–235 threads the bilayer; that stretch reads FLMYLTAYSGFDFVVSLSILW. Over 236-251 the chain is Lumenal; sequence KFFADEKYNDHYLSLN. A helical transmembrane segment spans residues 252-272; it reads LVFLFVLSLAFFITVGGFSAF. At 273–405 the chain is on the cytoplasmic side; sequence SLYLVFRNKT…ANQTTDTNPF (133 aa).

This sequence belongs to the DHHC palmitoyltransferase family. PFA3 subfamily. Autopalmitoylated.

It localises to the vacuole membrane. The catalysed reaction is L-cysteinyl-[protein] + hexadecanoyl-CoA = S-hexadecanoyl-L-cysteinyl-[protein] + CoA. Palmitoyltransferase specific for VAC8. Palmitoylates VAC8 at one or more of its N-terminal cysteine residues, which is required for its proper membrane localization. This chain is Palmitoyltransferase PFA3 (PFA3), found in Debaryomyces hansenii (strain ATCC 36239 / CBS 767 / BCRC 21394 / JCM 1990 / NBRC 0083 / IGC 2968) (Yeast).